The following is an 871-amino-acid chain: Tegument protein UL47 homolog (871 aa).

The disordered stretch occupies residues 1–212 (MDQHHGARGG…DEDDMEVIRD (212 aa)). The short motif at 13-33 (IRRPRRSIESRSHPFRATGNT) is the Nuclear localization signal element. Polar residues-rich tracts occupy residues 30-41 (TGNTQRTYSTPR) and 59-81 (EQASNQDESSNPSTSNAQQSTSF). 3 stretches are compositionally biased toward acidic residues: residues 114–134 (SSSEEEEEEGPAQAPLDEEDQ), 146–155 (SSDENDEEED), and 185–207 (SESETDIDAEEEEEDDEDDEDDM).

This sequence belongs to the alphaherpesvirinae HHV-1 UL47 family. Interacts with US3 kinase. Interacts with UL31 and UL34; these interactions seem important for efficient virion nuclear egress. Interacts with UL41/VHS. In terms of processing, phosphorylated by US3. This phosphorylation is required for proper nuclear localization.

The protein resides in the virion tegument. Its subcellular location is the host nucleus. The protein localises to the host cytoplasm. Its function is as follows. Tegument protein that can bind to various RNA transcripts. Plays a role in the attenuation of selective viral and cellular mRNA degradation by modulating the activity of host shutoff RNase UL41/VHS. Also plays a role in the primary envelopment of virions in the perinuclear space, probably by interacting with two nuclear egress proteins UL31 and UL34. This is Tegument protein UL47 homolog from Equus caballus (Horse).